The sequence spans 355 residues: tRNA uridine(34) hydroxylase (355 aa).

The 95-residue stretch at 146 to 240 folds into the Rhodanese domain; that stretch reads DDPDTLFVDM…YARKAKEQGL (95 aa). Residue cysteine 200 is the Cysteine persulfide intermediate of the active site. The segment at 333 to 355 is disordered; sequence NKSKGLLQATMHIPSPEKSADEK.

This sequence belongs to the TrhO family.

The enzyme catalyses uridine(34) in tRNA + AH2 + O2 = 5-hydroxyuridine(34) in tRNA + A + H2O. Functionally, catalyzes oxygen-dependent 5-hydroxyuridine (ho5U) modification at position 34 in tRNAs. This Yersinia pseudotuberculosis serotype O:1b (strain IP 31758) protein is tRNA uridine(34) hydroxylase.